A 308-amino-acid chain; its full sequence is 4-hydroxyproline 2-epimerase (308 aa).

Cysteine 88 (proton acceptor) is an active-site residue. Substrate-binding positions include 89-90 (GH), histidine 208, and aspartate 232. Cysteine 236 functions as the Proton donor in the catalytic mechanism. 237–238 (GT) is a binding site for substrate.

The protein belongs to the proline racemase family.

It carries out the reaction trans-4-hydroxy-L-proline = cis-4-hydroxy-D-proline. Catalyzes the epimerization of trans-4-hydroxy-L-proline (t4LHyp) to cis-4-hydroxy-D-proline (c4DHyp). Is likely involved in a degradation pathway that converts t4LHyp to alpha-ketoglutarate. Can also catalyze the epimerization of trans-3-hydroxy-L-proline (t3LHyp) to cis-3-hydroxy-D-proline (c3DHyp), albeit with 200-fold lower efficiency. This is 4-hydroxyproline 2-epimerase from Pseudomonas putida (strain ATCC 700007 / DSM 6899 / JCM 31910 / BCRC 17059 / LMG 24140 / F1).